Reading from the N-terminus, the 304-residue chain is tRNA dimethylallyltransferase (304 aa).

Position 2-9 (2-9 (GPTASGKT)) interacts with ATP. Residue 4-9 (TASGKT) participates in substrate binding. The interval 28–31 (DSAL) is interaction with substrate tRNA.

This sequence belongs to the IPP transferase family. In terms of assembly, monomer. Mg(2+) is required as a cofactor.

It carries out the reaction adenosine(37) in tRNA + dimethylallyl diphosphate = N(6)-dimethylallyladenosine(37) in tRNA + diphosphate. In terms of biological role, catalyzes the transfer of a dimethylallyl group onto the adenine at position 37 in tRNAs that read codons beginning with uridine, leading to the formation of N6-(dimethylallyl)adenosine (i(6)A). The protein is tRNA dimethylallyltransferase of Blochmanniella pennsylvanica (strain BPEN).